Consider the following 249-residue polypeptide: DNA repair protein RecO (249 aa).

The protein belongs to the RecO family.

Its function is as follows. Involved in DNA repair and RecF pathway recombination. This chain is DNA repair protein RecO, found in Mycoplasma mycoides subsp. mycoides SC (strain CCUG 32753 / NCTC 10114 / PG1).